Reading from the N-terminus, the 467-residue chain is Amino-acid permease RocE (467 aa).

12 consecutive transmembrane segments (helical) span residues 21–41 (FMIS…GFTI), 47–67 (LGAV…MLCL), 87–107 (FISP…WAVT), 122–142 (WFPH…MFIL), 162–182 (ILII…LIDL), 207–227 (MLIT…IGVA), 246–266 (VWRT…MIPW), 283–303 (IGIP…LLSV), 336–356 (VPMY…LTKF), 361–381 (TVYM…WITI), 409–429 (YPVL…SLAF), and 435–455 (IALY…HVVI).

It belongs to the amino acid-polyamine-organocation (APC) superfamily. Amino acid transporter (AAT) (TC 2.A.3.1) family.

The protein resides in the cell membrane. Putative transport protein involved in arginine degradative pathway. Probably transports arginine or ornithine. The polypeptide is Amino-acid permease RocE (Bacillus subtilis (strain 168)).